The chain runs to 265 residues: tRNA pseudouridine synthase A (265 aa).

D53 functions as the Nucleophile in the catalytic mechanism. Y111 is a substrate binding site.

Belongs to the tRNA pseudouridine synthase TruA family. In terms of assembly, homodimer.

The catalysed reaction is uridine(38/39/40) in tRNA = pseudouridine(38/39/40) in tRNA. Its function is as follows. Formation of pseudouridine at positions 38, 39 and 40 in the anticodon stem and loop of transfer RNAs. This Acinetobacter baumannii (strain ATCC 17978 / DSM 105126 / CIP 53.77 / LMG 1025 / NCDC KC755 / 5377) protein is tRNA pseudouridine synthase A.